A 510-amino-acid chain; its full sequence is GMP synthase [glutamine-hydrolyzing] (510 aa).

The Glutamine amidotransferase type-1 domain maps to 5–195 (PILVVNFGSQ…IYGVCKAEKN (191 aa)). The Nucleophile role is filled by cysteine 82. Active-site residues include histidine 169 and glutamate 171. Residues 196–385 (WEMGDFIHEK…LGVPEEILRR (190 aa)) form the GMPS ATP-PPase domain. 223–229 (SGGVDST) contributes to the ATP binding site.

Homodimer.

The catalysed reaction is XMP + L-glutamine + ATP + H2O = GMP + L-glutamate + AMP + diphosphate + 2 H(+). Its pathway is purine metabolism; GMP biosynthesis; GMP from XMP (L-Gln route): step 1/1. Its function is as follows. Catalyzes the synthesis of GMP from XMP. The polypeptide is GMP synthase [glutamine-hydrolyzing] (guaA) (Aquifex aeolicus (strain VF5)).